Here is a 199-residue protein sequence, read N- to C-terminus: MSLFALFYMLFAYLLGSISSAILICRIAGLPDPRQNGSHNPGATNVLRIGNRKSALAVLIFDMLKGMIPVWAGYYLGLTQFELGMVALGACLGHIFPIFFQFKGGKGVATAFGAIAPISWAVAGSMFGTWIFVFLVSGYSSLSAVISALLVPFYVWWFKPEFTFPVALVCCLLIYRHHDNIQRLWRGQEDKVWAKFKKK.

Transmembrane regions (helical) follow at residues 4–24 (FALF…AILI), 56–76 (LAVL…GYYL), 80–100 (QFEL…PIFF), 115–135 (IAPI…FVFL), and 154–176 (YVWW…LIYR).

The protein belongs to the PlsY family. As to quaternary structure, probably interacts with PlsX.

The protein resides in the cell inner membrane. It carries out the reaction an acyl phosphate + sn-glycerol 3-phosphate = a 1-acyl-sn-glycero-3-phosphate + phosphate. It functions in the pathway lipid metabolism; phospholipid metabolism. Its function is as follows. Catalyzes the transfer of an acyl group from acyl-phosphate (acyl-PO(4)) to glycerol-3-phosphate (G3P) to form lysophosphatidic acid (LPA). This enzyme utilizes acyl-phosphate as fatty acyl donor, but not acyl-CoA or acyl-ACP. This chain is Glycerol-3-phosphate acyltransferase, found in Haemophilus influenzae (strain PittGG).